Here is a 319-residue protein sequence, read N- to C-terminus: GCN5-related N-acetyltransferase 5, chloroplastic (319 aa).

The transit peptide at 1–55 (MAALSISLAFSVDSLKPTQSTKFGFSSSSHRYPLLYSCKSHRSNLRFAFPPSSVS) directs the protein to the chloroplast. Residues 109–297 (MWVRVMRHEE…KHLMRKKLLP (189 aa)) form the N-acetyltransferase domain. Acetyl-CoA is bound by residues 218–220 (MTV), 226–231 (RRGIGW), 258–260 (DEA), and Y265. The Proton donor role is filled by Y265.

This sequence belongs to the acetyltransferase family. GNAT subfamily. As to quaternary structure, oligomer. In terms of processing, autoacetylated. Expressed in green tissues.

Its subcellular location is the plastid. The protein localises to the chloroplast. The catalysed reaction is an N-terminal L-alpha-aminoacyl-[protein] + acetyl-CoA = N-terminal N(alpha)-acetyl-L-alpha-aminoacyl-[protein] + CoA + H(+). The enzyme catalyses L-lysyl-[protein] + acetyl-CoA = N(6)-acetyl-L-lysyl-[protein] + CoA + H(+). It catalyses the reaction N-terminal L-alanyl-[protein] + acetyl-CoA = N-terminal N(alpha)-acetyl-L-alanyl-[protein] + CoA + H(+). It carries out the reaction N-terminal L-seryl-[protein] + acetyl-CoA = N-terminal N(alpha)-acetyl-L-seryl-[protein] + CoA + H(+). The catalysed reaction is N-terminal L-methionyl-[protein] + acetyl-CoA = N-terminal N(alpha)-acetyl-L-methionyl-[protein] + CoA + H(+). The enzyme catalyses N-terminal L-valyl-[protein] + acetyl-CoA = N-terminal N(alpha)-acetyl-L-valyl-[protein] + CoA + H(+). It catalyses the reaction N-terminal L-threonyl-[protein] + acetyl-CoA = N-terminal N(alpha)-acetyl-L-threonyl-[protein] + CoA + H(+). Its function is as follows. Protein acetyltransferase with dual specificity triggering both N-alpha-acetylation (NTA), with a large spectrum of modified N-termini, including methionine, alanine, serine and to a lower extent threonine and valine as substrates, and epsilon-lysine acetylation (KA). The polypeptide is GCN5-related N-acetyltransferase 5, chloroplastic (Arabidopsis thaliana (Mouse-ear cress)).